The following is a 423-amino-acid chain: Adenosylmethionine-8-amino-7-oxononanoate aminotransferase (423 aa).

Tryptophan 51 contributes to the substrate binding site. 111-112 serves as a coordination point for pyridoxal 5'-phosphate; that stretch reads GS. Position 144 (tyrosine 144) interacts with substrate. Aspartate 243 lines the pyridoxal 5'-phosphate pocket. 2 residues coordinate substrate: lysine 272 and glycine 306. An N6-(pyridoxal phosphate)lysine modification is found at lysine 272. Residue 307–308 coordinates pyridoxal 5'-phosphate; that stretch reads PT. Residue arginine 390 coordinates substrate.

It belongs to the class-III pyridoxal-phosphate-dependent aminotransferase family. BioA subfamily. As to quaternary structure, homodimer. Pyridoxal 5'-phosphate is required as a cofactor.

Its subcellular location is the cytoplasm. It catalyses the reaction (8S)-8-amino-7-oxononanoate + S-adenosyl-L-methionine = S-adenosyl-4-methylsulfanyl-2-oxobutanoate + (7R,8S)-7,8-diammoniononanoate. It participates in cofactor biosynthesis; biotin biosynthesis; 7,8-diaminononanoate from 8-amino-7-oxononanoate (SAM route): step 1/1. Its function is as follows. Catalyzes the transfer of the alpha-amino group from S-adenosyl-L-methionine (SAM) to 7-keto-8-aminopelargonic acid (KAPA) to form 7,8-diaminopelargonic acid (DAPA). It is the only aminotransferase known to utilize SAM as an amino donor. This is Adenosylmethionine-8-amino-7-oxononanoate aminotransferase from Corynebacterium glutamicum (strain ATCC 13032 / DSM 20300 / JCM 1318 / BCRC 11384 / CCUG 27702 / LMG 3730 / NBRC 12168 / NCIMB 10025 / NRRL B-2784 / 534).